Reading from the N-terminus, the 577-residue chain is Acyl-coenzyme A synthetase ACSM2B, mitochondrial (577 aa).

The transit peptide at 1 to 46 (MHWLRKVQGLCTLWGTQMSSRTLYINSRQLVSLQWGHQEVPAKFNF) directs the protein to the mitochondrion. CoA is bound at residue Gln-139. ATP-binding positions include 221 to 229 (TSGTSGLPK), 359 to 364 (EFYGQT), Asp-446, and Arg-461. Thr-364 serves as a coordination point for substrate. 469-471 (SGY) provides a ligand contact to CoA. Arg-472 serves as a coordination point for substrate. Position 501 (Arg-501) interacts with CoA. Ser-513 bears the Phosphoserine mark. Residues Lys-532 and 540–542 (YPR) contribute to the CoA site. Lys-557 is a binding site for ATP.

It belongs to the ATP-dependent AMP-binding enzyme family. Monomer. Mg(2+) serves as cofactor. Mn(2+) is required as a cofactor. In terms of tissue distribution, detected in liver.

It localises to the mitochondrion. It carries out the reaction a medium-chain fatty acid + ATP + CoA = a medium-chain fatty acyl-CoA + AMP + diphosphate. The catalysed reaction is benzoate + ATP + CoA = benzoyl-CoA + AMP + diphosphate. It catalyses the reaction hexanoate + ATP + CoA = hexanoyl-CoA + AMP + diphosphate. The enzyme catalyses butanoate + ATP + CoA = butanoyl-CoA + AMP + diphosphate. It carries out the reaction octanoate + ATP + CoA = octanoyl-CoA + AMP + diphosphate. The catalysed reaction is decanoate + ATP + CoA = decanoyl-CoA + AMP + diphosphate. With respect to regulation, activated by monovalent cations, such as potassium, rubidium or ammonium. In terms of biological role, catalyzes the activation of fatty acids by CoA to produce an acyl-CoA, the first step in fatty acid metabolism. Capable of activating medium-chain fatty acids (e.g. butyric (C4) to decanoic (C10) acids), and certain carboxylate-containing xenobiotics, e.g. benzoate. This Homo sapiens (Human) protein is Acyl-coenzyme A synthetase ACSM2B, mitochondrial (ACSM2B).